Consider the following 284-residue polypeptide: Chaperone protein dnaJ 6 (284 aa).

Disordered regions lie at residues 1–30 (MGRK…ETSL), 196–221 (NKIS…AKDS), and 252–284 (GGDA…SRGK). The short motif at 3–6 (RKKK) is the Nuclear localization signal element. Positions 29 to 94 (SLYEVLGVER…EKRAVYDQTG (66 aa)) constitute a J domain. Positions 209–215 (RKRKKKK) match the Nuclear localization signal motif. Over residues 255–265 (AEAEPTEEEFE) the composition is skewed to acidic residues. A compositionally biased stretch (basic and acidic residues) spans 266-275 (AAQRRIESKR).

It belongs to the DnaJ family. C/III subfamily. In terms of tissue distribution, highly expressed in leaves, flowers and siliques, and to lower extent in roots.

Its subcellular location is the nucleus. In terms of biological role, plays a continuous role in plant development probably in the structural organization of compartments. The chain is Chaperone protein dnaJ 6 (ATJ6) from Arabidopsis thaliana (Mouse-ear cress).